A 546-amino-acid polypeptide reads, in one-letter code: MAAKDVKFGRTAREKMLRGVDILADAVKVTLGPKGRNVVIDKSFGAPRITKDGVSVAKEVELEDKFENMGAQMLREVASKTNDTAGDGTTTATVLGQAIVQEGAKAVAAGMNPMDLKRGIDLAVNEVVAELLKKAKKINTSEEVAQVGTISANGEAEIGKMIAEAMQKVGNEGVITVEEAKTAETELEVVEGMQFDRGYLSPYFVTNPEKMVADLEDAYILLHEKKLSNLQALLPVLEAVVQTSKPLLIIAEDVEGEALATLVVNKLRGGLKIAAVKAPGFGDRRKAMLEDIAILTGGQVISEDLGIKLESVTLDMLGRAKKVSISKENTTIVDGAGQKAEIDARVGQIKQQIEETTSDYDREKLQERLAKLAGGVAVIRVGGATEVEVKEKKDRVDDALNATRAAVEEGIVAGGGTALLRASTKITAKGVNADQEAGINIVRRAIQAPARQITTNAGEEASVIVGKILENTSETFGYNTANGEYGDLISLGIVDPVKVVRTALQNAASVAGLLITTEAMIAELPKKDAAPAGMPGGMGGMGGMDF.

ATP-binding positions include 30–33 (TLGP), Lys51, 87–91 (DGTTT), Gly415, and Asp495.

This sequence belongs to the chaperonin (HSP60) family. In terms of assembly, forms a cylinder of 14 subunits composed of two heptameric rings stacked back-to-back. Interacts with the co-chaperonin GroES.

The protein localises to the cytoplasm. The catalysed reaction is ATP + H2O + a folded polypeptide = ADP + phosphate + an unfolded polypeptide.. Its function is as follows. Together with its co-chaperonin GroES, plays an essential role in assisting protein folding. The GroEL-GroES system forms a nano-cage that allows encapsulation of the non-native substrate proteins and provides a physical environment optimized to promote and accelerate protein folding. The sequence is that of Chaperonin GroEL from Brucella suis (strain ATCC 23445 / NCTC 10510).